Consider the following 62-residue polypeptide: Large ribosomal subunit protein bL28 (62 aa).

Belongs to the bacterial ribosomal protein bL28 family.

This Wolinella succinogenes (strain ATCC 29543 / DSM 1740 / CCUG 13145 / JCM 31913 / LMG 7466 / NCTC 11488 / FDC 602W) (Vibrio succinogenes) protein is Large ribosomal subunit protein bL28.